A 698-amino-acid polypeptide reads, in one-letter code: Sialic acid-binding Ig-like lectin 11 (698 aa).

The N-terminal stretch at 1 to 27 (MVPGQAQPQSPEMLLLPLLLPVLGAGS) is a signal peptide. Topologically, residues 28 to 561 (LNKDPSYSLQ…KLEHGGGLGL (534 aa)) are extracellular. Positions 31 to 134 (DPSYSLQVQR…DEAWYFFRVE (104 aa)) constitute an Ig-like V-type domain. 3 cysteine pairs are disulfide-bonded: Cys49-Cys186, Cys54-Cys114, and Cys177-Cys228. 2 N-linked (GlcNAc...) asparagine glycosylation sites follow: Asn55 and Asn90. Residue Arg132 participates in N-acetylneuraminate binding. Ig-like C2-type domains follow at residues 159-244 (PDVY…RTVR), 251-350 (PKDL…LDLS), and 355-452 (PENL…LSLS). Asn262 carries an N-linked (GlcNAc...) asparagine glycan. A disulfide bridge links Cys287 with Cys334. 2 N-linked (GlcNAc...) asparagine glycosylation sites follow: Asn366 and Asn375. An intrachain disulfide couples Cys391 to Cys436. Asn497 and Asn515 each carry an N-linked (GlcNAc...) asparagine glycan. A helical transmembrane segment spans residues 562–584 (GAALGAGVAALLAFCSCLVVFRV). Topologically, residues 585–698 (KICRKEARKR…EREMSGMVPK (114 aa)) are cytoplasmic. Residues 596–635 (AAEQDVPSTLGPISQGHQHECSAGSSQDHPPPGAATYTPG) form a disordered region. The ITIM motif motif lies at 642–647 (LHYASL). Tyr668 is subject to Phosphotyrosine. The segment at 675–698 (TGQPLRGPGFGLQLEREMSGMVPK) is disordered.

This sequence belongs to the immunoglobulin superfamily. SIGLEC (sialic acid binding Ig-like lectin) family. In terms of assembly, interacts with PTPN6/SHP-1 and PTPN11/SHP-2 upon phosphorylation. Post-translationally, phosphorylated on tyrosine residues. As to expression, expressed by macrophages in various tissues including Kupffer cells. Also found in brain microglia.

It localises to the membrane. Putative adhesion molecule that mediates sialic-acid dependent binding to cells. Preferentially binds to alpha-2,8-linked sialic acid. The sialic acid recognition site may be masked by cis interactions with sialic acids on the same cell surface. In the immune response, may act as an inhibitory receptor upon ligand induced tyrosine phosphorylation by recruiting cytoplasmic phosphatase(s) via their SH2 domain(s) that block signal transduction through dephosphorylation of signaling molecules. The protein is Sialic acid-binding Ig-like lectin 11 (SIGLEC11) of Homo sapiens (Human).